Consider the following 60-residue polypeptide: Large ribosomal subunit protein bL32 (60 aa).

Belongs to the bacterial ribosomal protein bL32 family.

In Streptococcus mutans serotype c (strain ATCC 700610 / UA159), this protein is Large ribosomal subunit protein bL32.